The chain runs to 271 residues: Putative pyruvate, phosphate dikinase regulatory protein (271 aa).

An ADP-binding site is contributed by 153 to 160 (GVSRTSKT).

The protein belongs to the pyruvate, phosphate/water dikinase regulatory protein family. PDRP subfamily.

It carries out the reaction N(tele)-phospho-L-histidyl/L-threonyl-[pyruvate, phosphate dikinase] + ADP = N(tele)-phospho-L-histidyl/O-phospho-L-threonyl-[pyruvate, phosphate dikinase] + AMP + H(+). It catalyses the reaction N(tele)-phospho-L-histidyl/O-phospho-L-threonyl-[pyruvate, phosphate dikinase] + phosphate + H(+) = N(tele)-phospho-L-histidyl/L-threonyl-[pyruvate, phosphate dikinase] + diphosphate. Bifunctional serine/threonine kinase and phosphorylase involved in the regulation of the pyruvate, phosphate dikinase (PPDK) by catalyzing its phosphorylation/dephosphorylation. The chain is Putative pyruvate, phosphate dikinase regulatory protein from Shouchella clausii (strain KSM-K16) (Alkalihalobacillus clausii).